Consider the following 179-residue polypeptide: Signal peptidase complex subunit 3 (179 aa).

Residues 1 to 12 (MHTVLTRGNATV) are Cytoplasmic-facing. Residues 13–33 (AYTLSVLACLTFSCFLSTVFL) traverse the membrane as a helical; Signal-anchor for type II membrane protein segment. The Lumenal segment spans residues 34–179 (DYRTDANINT…FPADYATSSI (146 aa)). 2 N-linked (GlcNAc...) asparagine glycosylation sites follow: Asn-73 and Asn-141.

It belongs to the SPCS3 family. In terms of assembly, component of the signal peptidase complex (SPC) composed of a catalytic subunit twr/SEC11 and three accessory subunits Spase12/SPCS1, Spase25/SPCS2 and Spase22-23/SPCS3. The complex induces a local thinning of the ER membrane which is used to measure the length of the signal peptide (SP) h-region of protein substrates. This ensures the selectivity of the complex towards h-regions shorter than 18-20 amino acids.

It localises to the endoplasmic reticulum membrane. In terms of biological role, essential component of the signal peptidase complex (SPC) which catalyzes the cleavage of N-terminal signal sequences from nascent proteins as they are translocated into the lumen of the endoplasmic reticulum. Essential for the SPC catalytic activity, possibly by stabilizing and positioning the active center of the complex close to the lumenal surface. Its function is as follows. (Microbial infection) Plays an important role in infection by flaviviruses such as West Nile virus and Dengue virus type 2. The sequence is that of Signal peptidase complex subunit 3 (Spase22-23) from Drosophila melanogaster (Fruit fly).